Consider the following 116-residue polypeptide: UPF0499 protein ATEG_06693 (116 aa).

The signal sequence occupies residues 1–18; sequence MKLTGLLSLALLTTLALA. Cystine bridges form between cysteine 32/cysteine 46, cysteine 36/cysteine 49, and cysteine 42/cysteine 54.

The protein belongs to the UPF0499 family.

The protein resides in the secreted. The sequence is that of UPF0499 protein ATEG_06693 from Aspergillus terreus (strain NIH 2624 / FGSC A1156).